The primary structure comprises 182 residues: Adenine phosphoribosyltransferase (182 aa).

The protein belongs to the purine/pyrimidine phosphoribosyltransferase family. Homodimer.

It is found in the cytoplasm. The catalysed reaction is AMP + diphosphate = 5-phospho-alpha-D-ribose 1-diphosphate + adenine. It functions in the pathway purine metabolism; AMP biosynthesis via salvage pathway; AMP from adenine: step 1/1. Its function is as follows. Catalyzes a salvage reaction resulting in the formation of AMP, that is energically less costly than de novo synthesis. This is Adenine phosphoribosyltransferase from Stutzerimonas stutzeri (Pseudomonas stutzeri).